A 163-amino-acid polypeptide reads, in one-letter code: Nucleotide-binding protein BC_1159 (163 aa).

This sequence belongs to the YajQ family.

In terms of biological role, nucleotide-binding protein. The polypeptide is Nucleotide-binding protein BC_1159 (Bacillus cereus (strain ATCC 14579 / DSM 31 / CCUG 7414 / JCM 2152 / NBRC 15305 / NCIMB 9373 / NCTC 2599 / NRRL B-3711)).